The sequence spans 1742 residues: Complement C4 (1742 aa).

A signal peptide spans Met1 to Gln19. Asn60 carries an N-linked (GlcNAc...) asparagine glycan. Cys68 and Cys97 are oxidised to a cystine. N-linked (GlcNAc...) asparagine glycosylation occurs at Asn226. Cys634 and Cys668 form a disulfide bridge. Positions Arg675 to Arg678 are excised as a propeptide. 3 disulfide bridges follow: Cys701–Cys727, Cys702–Cys734, and Cys715–Cys735. One can recognise an Anaphylatoxin-like domain in the interval Cys701–Cys735. The N-linked (GlcNAc...) asparagine glycan is linked to Asn861. Positions Cys1007–Gln1010 form a cross-link, isoglutamyl cysteine thioester (Cys-Gln). Residues Asn1325 and Asn1388 are each glycosylated (N-linked (GlcNAc...) asparagine). Sulfotyrosine occurs at positions 1414, 1418, and 1420. The propeptide occupies Arg1445–Arg1451. Disulfide bonds link Cys1469/Cys1533, Cys1581/Cys1586, Cys1593/Cys1671, Cys1616/Cys1740, and Cys1716/Cys1725. In terms of domain architecture, NTR spans Cys1593 to Cys1740.

In absence of complement activation, circulates in blood as a disulfide-linked trimer of an alpha, beta and gamma chain. In terms of assembly, complement C4b is composed of complement C4b-A, complement C4 beta and complement C4 gamma chains that are associated via disulfide bonds. Non-enzymatic component of the C3 convertase, also named C4bC2b, composed of the serine protease complement C2b (C2), as well as complement C4b. Non-enzymatic component of the C5 convertase, also named C4bC2bC3b, composed of the serine protease complement C2b (C2), complement C3b, as well as complement C4b. Prior to secretion, the single-chain precursor is enzymatically cleaved by plasminogen (PLG) to yield non-identical chains alpha, beta and gamma. During activation of the complement systems, the alpha chain is cleaved into C4a and C4b by different proteases depending on the complement pathway: C4b stays linked to the beta and gamma chains, while C4a is released in the plasma. The alpha chain is cleaved by C1S to generate C4a and C4b following activation by the classical complement system. The alpha chain is cleaved to generate C4a and C4b by MASP2 following activation by the lectin complement system. The alpha chain is cleaved by GZMK to generate C4a and C4b following activation by the GZMK complement system. Further degradation of C4b by C1 into the inactive fragments C4c and C4d blocks the generation of C3 convertase. The proteolytic cleavages often are incomplete so that many structural forms can be found in plasma. In terms of processing, upon activation, the internal thioester bond reacts with carbohydrate antigens on the target surface to form amide or ester bonds, leading to covalent association with the surface of pathogens. Post-translationally, complement C4b interacts with complement C3b via a thioester linkage. N- and O-glycosylated. O-glycosylated with a core 1 or possibly core 8 glycan.

Its subcellular location is the secreted. The protein resides in the cell surface. Functionally, precursor of non-enzymatic components of the classical, lectin and GZMK complement pathways, which consist in a cascade of proteins that leads to phagocytosis and breakdown of pathogens and signaling that strengthens the adaptive immune system. Non-enzymatic component of C3 and C5 convertases. Generated following cleavage by complement proteases (C1S, MASP2 or GZMK, depending on the complement pathway), it covalently attaches to the surface of pathogens, where it acts as an opsonin that marks the surface of antigens for removal. It then recruits the serine protease complement C2b to form the C3 and C5 convertases, which cleave and activate C3 and C5, respectively, the next components of the complement pathways. Complement C4b-A isotype is responsible for effective binding to form amide bonds with immune aggregates or protein antigens, while complement C4b-B isotype catalyzes the transacylation of the thioester carbonyl group to form ester bonds with carbohydrate antigens. In terms of biological role, putative humoral mediator released following cleavage by complement proteases (C1S, MASP2 or GZMK, depending on the complement pathway). While it is strongly similar to anaphylatoxins, its role is unclear. Was reported to act as a mediator of local inflammatory process; however these effects were probably due to contamination with C3a and/C5a anaphylatoxins in biological assays. The chain is Complement C4 from Cavia porcellus (Guinea pig).